The following is a 357-amino-acid chain: RGG repeats nuclear RNA binding protein C (357 aa).

N-acetylalanine is present on Ala-2. Positions Ser-25 to Thr-232 are disordered. Residues Ala-31–Thr-45 are compositionally biased toward low complexity. Gly residues-rich tracts occupy residues Gly-63–Gly-82 and Ser-114–Arg-128. A compositionally biased stretch (basic and acidic residues) spans Asp-143–Ser-155. Over residues His-159–Asn-172 the composition is skewed to gly residues. A compositionally biased stretch (basic and acidic residues) spans Glu-190–Thr-232. Positions Ile-239–Ser-299 constitute an FF domain. The segment at Pro-308–Gly-357 is disordered. Over residues Gly-316–Gly-334 the composition is skewed to gly residues. Residue Ser-355 is modified to Phosphoserine.

It belongs to the SERBP1-HABP4 family.

The protein localises to the nucleus. The protein resides in the cytoplasm. It localises to the perinuclear region. Functionally, ribosome-binding protein that acts as a regulator of mRNA translation by promoting ribosome inactivation. Binds RNA. The sequence is that of RGG repeats nuclear RNA binding protein C from Arabidopsis thaliana (Mouse-ear cress).